Reading from the N-terminus, the 132-residue chain is MMNMIEWTKHVLESDDTKLIYWLTLLMVCMIVDTILGIVIARINPKEKFSSFKMKTGILIKVSEMIIALLAVPFALPFPAGLPLLYTVYTALCVSEMYSIFGHLRVVDDKSNFLSIIEGFFKQTYRKDKGDK.

Topologically, residues 1-16 (MMNMIEWTKHVLESDD) are periplasmic. Cytoplasmic loops occupy residues 1-61 (MMNM…ILIK) and 39-58 (VIARINPKEKFSSFKMKTGI). The helical transmembrane segment at 17–38 (TKLIYWLTLLMVCMIVDTILGI) threads the bilayer. The chain crosses the membrane as a helical span at residues 62–80 (VSEMIIALLAVPFALPFPA). Residues 81-85 (GLPLL) are Periplasmic-facing. The helical transmembrane segment at 86 to 107 (YTVYTALCVSEMYSIFGHLRVV) threads the bilayer. The Cytoplasmic segment spans residues 108–132 (DDKSNFLSIIEGFFKQTYRKDKGDK).

It belongs to the bacteriophage holin family. phi29likevirus holin subfamily. In terms of assembly, homomultimer. Interacts with isoform Antiholin; this interaction blocks the holin homomultimerization and delays host cell lysis.

The protein localises to the host cell inner membrane. Its function is as follows. Accumulates harmlessly in the cytoplasmic membrane until it reaches a critical concentration that triggers the formation of micron-scale pores (holes) causing host cell membrane disruption and endolysin escape into the periplasmic space. Determines the precise timing of host cell lysis. Participates with the endolysin and spanin proteins in the sequential events which lead to the programmed host cell lysis releasing the mature viral particles from the host cell. Functionally, counteracts the aggregation of the holin molecules and thus of pore formation. The protein is Antiholin (14) of Bacillus phage B103 (Bacteriophage B103).